A 270-amino-acid chain; its full sequence is Elongation factor Ts (270 aa).

Residues 75–78 (TDFV) form an involved in Mg(2+) ion dislocation from EF-Tu region.

Belongs to the EF-Ts family.

Its subcellular location is the cytoplasm. Functionally, associates with the EF-Tu.GDP complex and induces the exchange of GDP to GTP. It remains bound to the aminoacyl-tRNA.EF-Tu.GTP complex up to the GTP hydrolysis stage on the ribosome. In Cutibacterium acnes (strain DSM 16379 / KPA171202) (Propionibacterium acnes), this protein is Elongation factor Ts.